A 393-amino-acid polypeptide reads, in one-letter code: Dual specificity mitogen-activated protein kinase kinase 1 (393 aa).

The disordered stretch occupies residues 1–27; that stretch reads MPKKKPTPIQLNPAPDGSAVNGTSSAE. Residues 68–361 enclose the Protein kinase domain; sequence FEKISELGAG…LKQLMVHAFI (294 aa). Residues 74 to 82 and Lys97 contribute to the ATP site; that span reads LGAGNGGVV. The active-site Proton acceptor is the Asp190. 2 positions are modified to phosphoserine; by RAF: Ser218 and Ser222. Residues 270-307 are RAF1-binding; sequence ELELLFGCHVEGDAAETPPRPRTPGRPLSSYGMDSRPP. Thr286 bears the Phosphothreonine mark. Position 292 is a phosphothreonine; by MAPK1 (Thr292). At Ser298 the chain carries Phosphoserine; by PAK.

The protein belongs to the protein kinase superfamily. STE Ser/Thr protein kinase family. MAP kinase kinase subfamily. In terms of assembly, found in a complex with at least BRAF, HRAS, MAP2K1, MAPK3/ERK1 and RGS14. Forms a heterodimer with MAP2K2/MEK2. Forms heterodimers with KSR2 which further dimerize to form tetramers. Interacts with KSR1 or KSR2 and BRAF; the interaction with KSR1 or KSR2 mediates KSR1-BRAF or KSR2-BRAF dimerization. Interacts with ARBB2, LAMTOR3, MAPK1/ERK2 and RAF1. Interacts with MAPK1/ERK2. Interacts with MORG1. Interacts with PPARG. Interacts with SGK1. Interacts with BIRC6/bruce. Interacts with KAT7; the interaction promotes KAT7 phosphorylation. Interacts with RAF1 and NEK10; the interaction is required for ERK1/2-signaling pathway activation in response to UV irradiation. Interacts with TRAF3IP3. Interacts with MOS. Post-translationally, phosphorylation at Ser-218 and Ser-222 by MAP kinase kinase kinases (BRAF or MEKK1) positively regulates kinase activity. Also phosphorylated at Thr-292 by MAPK1/ERK2 and at Ser-298 by PAK. MAPK1/ERK2 phosphorylation of Thr-292 occurs in response to cellular adhesion and leads to inhibition of Ser-298 phosphorylation by PAK. Autophosphorylated at Ser-218 and Ser-222, autophosphosphorylation is promoted by NEK10 following UV irradiation.

It is found in the cytoplasm. Its subcellular location is the cytoskeleton. It localises to the microtubule organizing center. The protein localises to the centrosome. The protein resides in the spindle pole body. It is found in the nucleus. Its subcellular location is the membrane. The enzyme catalyses L-seryl-[protein] + ATP = O-phospho-L-seryl-[protein] + ADP + H(+). The catalysed reaction is L-threonyl-[protein] + ATP = O-phospho-L-threonyl-[protein] + ADP + H(+). It carries out the reaction L-tyrosyl-[protein] + ATP = O-phospho-L-tyrosyl-[protein] + ADP + H(+). Its activity is regulated as follows. Ras proteins such as HRAS mediate the activation of RAF proteins such as RAF1 or BRAF which in turn activate extracellular signal-regulated kinases (ERK) through MAPK (mitogen-activated protein kinases) and ERK kinases MAP2K1/MEK1 and MAP2K2/MEK2. Activation occurs through phosphorylation of Ser-218 and Ser-222. MAP2K1/MEK1 binds KSR1 or KSR2 releasing the inhibitory intramolecular interaction between KSR1 or KSR2 protein kinase and N-terminal domains. This allows KSR1 or KSR2 dimerization with BRAF leading to BRAF activation and phosphorylation of MAP2K1. MAP2K1/MEK1 is also the target of negative feed-back regulation by its substrate kinases, such as MAPK1/ERK2. These phosphorylate MAP2K1/MEK1 on Thr-292, thereby facilitating dephosphorylation of the activating residues Ser-218 and Ser-222. Inhibited by serine/threonine phosphatase 2A. In terms of biological role, dual specificity protein kinase which acts as an essential component of the MAP kinase signal transduction pathway. Binding of extracellular ligands such as growth factors, cytokines and hormones to their cell-surface receptors activates RAS and this initiates RAF1 activation. RAF1 then further activates the dual-specificity protein kinases MAP2K1/MEK1 and MAP2K2/MEK2. Both MAP2K1/MEK1 and MAP2K2/MEK2 function specifically in the MAPK/ERK cascade, and catalyze the concomitant phosphorylation of a threonine and a tyrosine residue in a Thr-Glu-Tyr sequence located in the extracellular signal-regulated kinases MAPK3/ERK1 and MAPK1/ERK2, leading to their activation and further transduction of the signal within the MAPK/ERK cascade. Activates BRAF in a KSR1 or KSR2-dependent manner; by binding to KSR1 or KSR2 releases the inhibitory intramolecular interaction between KSR1 or KSR2 protein kinase and N-terminal domains which promotes KSR1 or KSR2-BRAF dimerization and BRAF activation. Depending on the cellular context, this pathway mediates diverse biological functions such as cell growth, adhesion, survival and differentiation, predominantly through the regulation of transcription, metabolism and cytoskeletal rearrangements. One target of the MAPK/ERK cascade is peroxisome proliferator-activated receptor gamma (PPARG), a nuclear receptor that promotes differentiation and apoptosis. MAP2K1/MEK1 has been shown to export PPARG from the nucleus. The MAPK/ERK cascade is also involved in the regulation of endosomal dynamics, including lysosome processing and endosome cycling through the perinuclear recycling compartment (PNRC), as well as in the fragmentation of the Golgi apparatus during mitosis. This chain is Dual specificity mitogen-activated protein kinase kinase 1 (Map2k1), found in Mus musculus (Mouse).